The primary structure comprises 839 residues: Genome polyprotein (839 aa).

Residues 55-66 (TAEVGSHQSEPL) show a composition bias toward polar residues. The segment at 55-76 (TAEVGSHQSEPLKTSVDKPGSK) is disordered. Short sequence motifs ((L)YPX(n)L motif) lie at residues 167 to 171 (YPHGL) and 200 to 205 (YPVWEL). Positions 496-510 (SGGFSTTVSTEQNVP) are enriched in polar residues. 2 disordered regions span residues 496 to 530 (SGGFSTTVSTEQNVPDPQVGITTPKDLKGKANKGK) and 773 to 792 (GDLESSVDDPRTDEDRRFES). The segment at 766-836 (MLDRIAGGDL…RKLKGLFSQS (71 aa)) is involved in P1-2A pentamerization. Residues 780–792 (DDPRTDEDRRFES) show a composition bias toward basic and acidic residues.

This sequence belongs to the picornaviridae polyprotein family. As to quaternary structure, homodimer. Homomultimer; probably interacts with membranes in a multimeric form. Seems to assemble into amyloid-like fibers. In terms of assembly, homopentamer. Homooligomer. Interacts with capsid protein VP2. Interacts with capsid protein VP3. As to quaternary structure, interacts with capsid protein VP1. Interacts with capsid protein VP3. In terms of assembly, interacts with capsid protein VP1. Interacts with capsid protein VP2. Specific enzymatic cleavages by viral protease in vivo yield a variety of precursors and mature proteins. Polyprotein processing intermediates are produced, such as P1-2A which is a functional precursor of the structural proteins, VP0 which is a VP4-VP2 precursor, VP1-2A precursor, 3ABC precursor which is a stable and catalytically active precursor of 3A, 3B and 3C proteins, 3AB and 3CD precursors. The assembly signal 2A is removed from VP1-2A by a host protease, possibly host Cathepsin L. This cleavage occurs over a region of 3 amino-acids probably generating VP1 proteins with heterogeneous C-termini. In terms of processing, during virion maturation, immature virions are rendered infectious following cleavage of VP0 into VP4 and VP2. This maturation seems to be an autocatalytic event triggered by the presence of RNA in the capsid and is followed by a conformational change of the particle. Post-translationally, the assembly signal 2A is removed from VP1-2A by a host protease, possibly host Cathepsin L in naked virions. This cleavage does not occur in enveloped virions. This cleavage occurs over a region of 3 amino-acids probably generating VP1 proteins with heterogeneous C-termini. Unlike other picornaviruses, does not seem to be myristoylated.

The protein localises to the virion. It is found in the host endosome. The protein resides in the host multivesicular body. It localises to the host membrane. Its function is as follows. Capsid proteins VP1, VP2, and VP3 form a closed capsid enclosing the viral positive strand RNA genome. All these proteins contain a beta-sheet structure called beta-barrel jelly roll. Together they form an icosahedral capsid (T=3) composed of 60 copies of each VP1, VP2, and VP3, with a diameter of approximately 300 Angstroms. VP1 is situated at the 12 fivefold axes, whereas VP2 and VP3 are located at the quasi-sixfold axes. The naked capsid interacts with the host receptor HAVCR1 to provide virion attachment to and probably entry into the target cell. VP0 precursor is a component of the immature procapsids. Functionally, plays a role in the assembly of the 12 pentamers into an icosahedral structure. Has not been detected in mature virions, supposedly owing to its small size. In terms of biological role, precursor component of immature procapsids that corresponds to an extended form of the structural protein VP1. After maturation, possibly by the host Cathepsin L, the assembly signal 2A is cleaved to give rise to the mature VP1 protein. Its function is as follows. Affects membrane integrity and causes an increase in membrane permeability. Functions as a viroporin. Affects membrane integrity and causes an increase in membrane permeability. Involved in host intracellular membrane rearrangements probably to give rise to the viral factories. Does not disrupt calcium homeostasis or glycoprotein trafficking. Antagonizes the innate immune response of the host by suppressing IFN-beta synthesis, which it achieves by interfering with the RIG-I/IFIH1 pathway. This is Genome polyprotein from Callithrix (Owl-faced monkey).